Here is a 977-residue protein sequence, read N- to C-terminus: Serine/threonine-protein kinase N2 (977 aa).

3 REM-1 domains span residues 24–100, 114–194, and 200–280; these read NLDF…HIVV, DTPK…TSEI, and DVTT…ELPK. One can recognise a C2 domain in the interval 298 to 468; sequence PPNSPRQSIM…LYLEPQGTLF (171 aa). 2 disordered regions span residues 342–381 and 531–576; these read GRSKTASVSLPGWSPSEARSSFMSRGNKNKSGSSRTLSKS and AADL…KRNS. Polar residues predominate over residues 358–378; it reads EARSSFMSRGNKNKSGSSRTL. The Protein kinase domain occupies 650 to 909; that stretch reads FKCVAVLGRG…AEEVKRHPFF (260 aa). ATP contacts are provided by residues 656 to 664 and Lys-679; that span reads LGRGHFGKV. Catalysis depends on Asp-775, which acts as the Proton acceptor. Residues 910 to 977 enclose the AGC-kinase C-terminal domain; sequence RDMDWPGLLA…ADFDYIADWC (68 aa).

This sequence belongs to the protein kinase superfamily. AGC Ser/Thr protein kinase family. PKC subfamily. In terms of processing, autophosphorylated. Phosphorylated. Proteolytically cleaved.

Its subcellular location is the cytoplasm. The protein resides in the nucleus. It is found in the membrane. The protein localises to the cell projection. It localises to the lamellipodium. Its subcellular location is the cytoskeleton. The protein resides in the cleavage furrow. It is found in the midbody. The protein localises to the cell junction. It carries out the reaction L-seryl-[protein] + ATP = O-phospho-L-seryl-[protein] + ADP + H(+). The catalysed reaction is L-threonyl-[protein] + ATP = O-phospho-L-threonyl-[protein] + ADP + H(+). Its activity is regulated as follows. Kinase activity is activated upon binding to GTP-bound Rho/Rac GTPases. Activated by lipids, particularly cardiolipin and to a lesser extent by other acidic phospholipids and unsaturated fatty acids. Two specific sites, Thr-809 (activation loop of the kinase domain) and Thr-951 (turn motif), may be needed to be phosphorylated for its full activation. Its function is as follows. Pkc-related serine/threonine-protein kinase and Rho/Rac effector protein that participates in specific signal transduction responses in the cell. May play a role in the regulation of cell cycle progression, actin cytoskeleton assembly, cell migration, cell adhesion and transcription activation signaling processes. This chain is Serine/threonine-protein kinase N2 (pkn2), found in Danio rerio (Zebrafish).